Consider the following 248-residue polypeptide: Probable transcriptional regulatory protein Dde_2325 (248 aa).

Residues 1-15 show a composition bias toward basic residues; the sequence is MAGHSKWKNIQHRKG. Positions 1-22 are disordered; that stretch reads MAGHSKWKNIQHRKGRQDAKKS.

Belongs to the TACO1 family.

The protein resides in the cytoplasm. This chain is Probable transcriptional regulatory protein Dde_2325, found in Oleidesulfovibrio alaskensis (strain ATCC BAA-1058 / DSM 17464 / G20) (Desulfovibrio alaskensis).